The sequence spans 552 residues: Glutamine--tRNA ligase (552 aa).

Positions 34-44 (PEPNGYLHIGH) match the 'HIGH' region motif. ATP contacts are provided by residues 35 to 37 (EPN) and 41 to 47 (HIGHAKS). Residues Asp-67 and Tyr-212 each coordinate L-glutamine. ATP contacts are provided by residues Thr-231, 261–262 (RL), and 269–271 (MSK). A 'KMSKS' region motif is present at residues 268 to 272 (IMSKR).

This sequence belongs to the class-I aminoacyl-tRNA synthetase family. As to quaternary structure, monomer.

The protein resides in the cytoplasm. It carries out the reaction tRNA(Gln) + L-glutamine + ATP = L-glutaminyl-tRNA(Gln) + AMP + diphosphate. The chain is Glutamine--tRNA ligase from Aliivibrio salmonicida (strain LFI1238) (Vibrio salmonicida (strain LFI1238)).